We begin with the raw amino-acid sequence, 64 residues long: Large ribosomal subunit protein bL35 (64 aa).

The interval 1 to 44 (MPKLKTNRGAAKRFKVKASGRISRARSNHSHILTKKDPKRKRRL) is disordered. Positions 10 to 44 (AAKRFKVKASGRISRARSNHSHILTKKDPKRKRRL) are enriched in basic residues.

This sequence belongs to the bacterial ribosomal protein bL35 family.

This is Large ribosomal subunit protein bL35 from Halorhodospira halophila (strain DSM 244 / SL1) (Ectothiorhodospira halophila (strain DSM 244 / SL1)).